The primary structure comprises 90 residues: Secretoglobin family 1D member 1 (90 aa).

The first 21 residues, 1–21 (MRLSVCLLLLTLALCCYRANA), serve as a signal peptide directing secretion.

As to quaternary structure, heterodimer of a lipophilin A and a lipophilin C (mammaglobin B) monomer associated head to head. As to expression, expressed in lachrymal gland, thymus, kidney, testis, ovary and salivary gland.

It localises to the secreted. Its function is as follows. May bind androgens and other steroids, may also bind estramustine, a chemotherapeutic agent used for prostate cancer. May be under transcriptional regulation of steroid hormones. The polypeptide is Secretoglobin family 1D member 1 (SCGB1D1) (Homo sapiens (Human)).